Consider the following 158-residue polypeptide: Regenerating islet-derived protein 4 (158 aa).

The N-terminal stretch at 1-22 is a signal peptide; sequence MASRSMRLLLLLSCLAKTGVLG. Cysteine 30 and cysteine 41 are disulfide-bonded. One can recognise a C-type lectin domain in the interval 37–155; it reads HKSNCYGYFR…CNKRQHFLCK (119 aa). A glycan (N-linked (GlcNAc...) asparagine) is linked at asparagine 50. 2 cysteine pairs are disulfide-bonded: cysteine 58-cysteine 154 and cysteine 129-cysteine 146. Residues 98–103 and 135–137 each bind a carbohydrate; these read DPQKRQ and NNN.

Highly expressed in the gastrointestinal tract including the duodenum, jejunum, ileum, ileocecum, appendix, descending colon, pancreas and small intestine. Weakly expressed in normal colon and stomach. Strongly expressed in most colorectal tumors than in normal colon. Preferentially expressed in mucinous tumors and in some cases neuro-endocrine tumors. Expressed in mucus-secreting cells and enterocyte-like cells. In small intestine expressed at the basal perinuclear zone of goblet cells.

It is found in the secreted. Its function is as follows. Calcium-independent lectin displaying mannose-binding specificity and able to maintain carbohydrate recognition activity in an acidic environment. May be involved in inflammatory and metaplastic responses of the gastrointestinal epithelium. In Homo sapiens (Human), this protein is Regenerating islet-derived protein 4 (REG4).